The sequence spans 428 residues: Spliceosome RNA helicase Ddx39b (428 aa).

Residues 1-19 (MAENDVDNELLDYEDDEVE) show a composition bias toward acidic residues. Positions 1–31 (MAENDVDNELLDYEDDEVETAAGADGTEAPA) are disordered. Ala2 carries the N-acetylalanine modification. Lys36 is subject to N6-acetyllysine; alternate. Lys36 is covalently cross-linked (Glycyl lysine isopeptide (Lys-Gly) (interchain with G-Cter in SUMO2); alternate). Residues Ser38 and Ser41 each carry the phosphoserine modification. The short motif at 45–73 (SGFRDFLLKPELLRAIVDCGFEHPSEVQH) is the Q motif element. The Helicase ATP-binding domain occupies 76–249 (IPQAILGMDV…RKFMQDPMEI (174 aa)). ATP is bound at residue 89 to 96 (AKSGMGKT). Residue Thr172 is modified to Phosphothreonine. A DECD box motif is present at residues 196-199 (DECD). The Helicase C-terminal domain occupies 261-422 (GLQQYYVKLK…ELPDEIDISS (162 aa)).

Belongs to the DEAD box helicase family. DECD subfamily. Homodimer, and heterodimer with DDX39A. DDX39B interacts with the THO subcomplex to form the THO-DDX39B complex which multimerizes into a 28-subunit tetrameric assembly. Component of the transcription/export (TREX) complex at least composed of ALYREF/THOC4, DDX39B, SARNP/CIP29, CHTOP and the THO subcomplex; in the complex interacts with THOC2. THOC1-THOC2-THOC3-DDX39B subcomplex is sufficient for the interaction with export factor NXF1-NXT1. TREX seems to have a dynamic structure involving ATP-dependent remodeling. Within the TREX complex bridges ALYREF/THOC4 and the THO subcomplex, and, in a ATP-dependent manner, ALYREF/THOC4 and SARNP/CIP29. Component of the spliceosome. Interacts directly with U2AF2. Interacts with RBM8A, RNPS1 and SRRM1, FYTTD1/UIF, THOC1, MX1 and POLDIP3. Interacts with LUZP4. Interacts with SARNP/CIP29 (via the C-terminal domain); the interaction is direct and facilitates RNA binding of DDX39B.

The protein localises to the nucleus. The protein resides in the nucleus speckle. It is found in the cytoplasm. It carries out the reaction ATP + H2O = ADP + phosphate + H(+). In terms of biological role, involved in nuclear export of spliced and unspliced mRNA. Component of the TREX complex which is thought to couple mRNA transcription, processing and nuclear export, and specifically associates with spliced mRNA and not with unspliced pre-mRNA. The TREX complex is recruited to spliced mRNAs by a transcription-independent mechanism, binds to mRNA upstream of the exon-junction complex (EJC) and is recruited in a splicing- and cap-dependent manner to a region near the 5' end of the mRNA where it functions in mRNA export to the cytoplasm via the TAP/NXF1 pathway. The THOC1-THOC2-THOC3 core complex alone is sufficient to promote ATPase activity of DDX39B; in the complex THOC2 is the only component that directly interacts with DDX39B. Associates with SARNP/CIP29, which facilitates RNA binding of DDX39B and likely plays a role in mRNA export. May undergo several rounds of ATP hydrolysis during assembly of TREX to drive subsequent loading of components such as ALYREF/THOC4 and CHTOP onto mRNA. Also associates with pre-mRNA independent of ALYREF/THOC4. Involved in the nuclear export of intronless mRNA; the ATP-bound form is proposed to recruit export adapter ALYREF/THOC4 to intronless mRNA; its ATPase activity is cooperatively stimulated by RNA and ALYREF/THOC4 and ATP hydrolysis is thought to trigger the dissociation from RNA to allow the association of ALYREF/THOC4 and the NXF1-NXT1 heterodimer. Involved in transcription elongation and genome stability. Splice factor that is required for the first ATP-dependent step in spliceosome assembly and for the interaction of U2 snRNP with the branchpoint. Has both RNA-stimulated ATP binding/hydrolysis activity and ATP-dependent RNA unwinding activity. Even with the stimulation of RNA, the ATPase activity is weak. Can only hydrolyze ATP but not other NTPs. The RNA stimulation of ATPase activity does not have a strong preference for the sequence and length of the RNA. However, ssRNA stimulates the ATPase activity much more strongly than dsRNA. Can unwind 5' or 3' overhangs or blunt end RNA duplexes in vitro. The ATPase and helicase activities are not influenced by U2AF2; the effect of ALYREF/THOC4 is reported conflictingly. The chain is Spliceosome RNA helicase Ddx39b (Ddx39b) from Mus musculus (Mouse).